A 107-amino-acid polypeptide reads, in one-letter code: U1-lycotoxin-Ls1f (107 aa).

A signal peptide spans 1-20 (MMKVLVVVALLVTLISYSSS). A propeptide spanning residues 21-41 (EGIDDLEADELLSLMANEQTR) is cleaved from the precursor. 4 disulfide bridges follow: Cys44-Cys59, Cys51-Cys68, Cys58-Cys86, and Cys70-Cys84.

Belongs to the neurotoxin 19 (CSTX) family. 04 (U1-Lctx) subfamily. As to expression, expressed by the venom gland.

The protein resides in the secreted. The polypeptide is U1-lycotoxin-Ls1f (Lycosa singoriensis (Wolf spider)).